The sequence spans 328 residues: ATP synthase mitochondrial F1 complex assembly factor 1 (328 aa).

Residues 1–57 (MAAVVVAAAGGAGPAVLQVAGLYRGLCAVRSRALGLGLVSPAQLRVFPVRPGSGRPE) constitute a mitochondrion transit peptide.

The protein belongs to the ATP11 family. In terms of assembly, interacts with ATP5F1B; involved in the assembly of the F1 component of the mitochondrial ATP synthase (ATPase). Weakly expressed in muscle.

The protein localises to the mitochondrion inner membrane. Functionally, has a complex stabilizing activity in the assembly of the mitochondrial F1-F0 complex. The chain is ATP synthase mitochondrial F1 complex assembly factor 1 from Homo sapiens (Human).